Reading from the N-terminus, the 147-residue chain is Large ribosomal subunit protein uL13 (147 aa).

It belongs to the universal ribosomal protein uL13 family. In terms of assembly, part of the 50S ribosomal subunit.

In terms of biological role, this protein is one of the early assembly proteins of the 50S ribosomal subunit, although it is not seen to bind rRNA by itself. It is important during the early stages of 50S assembly. The chain is Large ribosomal subunit protein uL13 from Latilactobacillus sakei subsp. sakei (strain 23K) (Lactobacillus sakei subsp. sakei).